A 362-amino-acid chain; its full sequence is Phosphoserine aminotransferase (362 aa).

L-glutamate is bound by residues Ser9 and Arg42. Pyridoxal 5'-phosphate-binding positions include 76 to 77 (GR), Trp102, Thr153, Asp174, and Gln197. N6-(pyridoxal phosphate)lysine is present on Lys198. Residue 239–240 (NT) coordinates pyridoxal 5'-phosphate.

It belongs to the class-V pyridoxal-phosphate-dependent aminotransferase family. SerC subfamily. As to quaternary structure, homodimer. Pyridoxal 5'-phosphate serves as cofactor.

It is found in the cytoplasm. It carries out the reaction O-phospho-L-serine + 2-oxoglutarate = 3-phosphooxypyruvate + L-glutamate. The enzyme catalyses 4-(phosphooxy)-L-threonine + 2-oxoglutarate = (R)-3-hydroxy-2-oxo-4-phosphooxybutanoate + L-glutamate. It participates in amino-acid biosynthesis; L-serine biosynthesis; L-serine from 3-phospho-D-glycerate: step 2/3. Its pathway is cofactor biosynthesis; pyridoxine 5'-phosphate biosynthesis; pyridoxine 5'-phosphate from D-erythrose 4-phosphate: step 3/5. Catalyzes the reversible conversion of 3-phosphohydroxypyruvate to phosphoserine and of 3-hydroxy-2-oxo-4-phosphonooxybutanoate to phosphohydroxythreonine. In Escherichia coli O157:H7, this protein is Phosphoserine aminotransferase.